A 507-amino-acid polypeptide reads, in one-letter code: Arabinose import ATP-binding protein AraG (507 aa).

ABC transporter domains follow at residues 8-243 and 255-499; these read LSFH…MVGR and PHGE…MLRI. Position 40 to 47 (40 to 47) interacts with ATP; the sequence is GENGAGKS.

The protein belongs to the ABC transporter superfamily. Arabinose importer (TC 3.A.1.2.2) family. In terms of assembly, the complex is composed of two ATP-binding proteins (AraG), two transmembrane proteins (AraH) and a solute-binding protein (AraF).

It is found in the cell inner membrane. The enzyme catalyses L-arabinose(out) + ATP + H2O = L-arabinose(in) + ADP + phosphate + H(+). Its function is as follows. Part of the ABC transporter complex AraFGH involved in arabinose import. Responsible for energy coupling to the transport system. The chain is Arabinose import ATP-binding protein AraG from Pectobacterium atrosepticum (strain SCRI 1043 / ATCC BAA-672) (Erwinia carotovora subsp. atroseptica).